The chain runs to 389 residues: 26S proteasome non-ATPase regulatory subunit 6 (389 aa).

Residues 193–361 enclose the PCI domain; sequence DFKQAAELFL…EIVETNRPDS (169 aa).

This sequence belongs to the proteasome subunit S10 family. Component of the 19S proteasome regulatory particle complex. The 26S proteasome consists of a 20S core particle (CP) and two 19S regulatory subunits (RP). The regulatory particle is made of a lid composed of 9 subunits including PSMD6, a base containing 6 ATPases and few additional components.

In terms of biological role, component of the 26S proteasome, a multiprotein complex involved in the ATP-dependent degradation of ubiquitinated proteins. This complex plays a key role in the maintenance of protein homeostasis by removing misfolded or damaged proteins, which could impair cellular functions, and by removing proteins whose functions are no longer required. Therefore, the proteasome participates in numerous cellular processes, including cell cycle progression, apoptosis, or DNA damage repair. The chain is 26S proteasome non-ATPase regulatory subunit 6 (Psmd6) from Mus musculus (Mouse).